A 453-amino-acid chain; its full sequence is MNSKIKSIYMVGIGGSGMSGIAEILLNLGYEVHGSDIMESHIIHRLRKLGAIISIGHQAENLGDISVVVKSSAVTEDNPEIQLARQHGIPVIPRAEMLTELMRLRKGVAIAGTHGKTTTTSLTATVFDTAGFDPTVVIGGVLNAYGANARLGQGQYLIAEADESDGSFLLLLPIINVVTNIDLDHLDYYRSFEEIEHAFVTFMNNVPFYGMNVVCGDDPGVQRVLPRVNRQVITYGFESSNHIWAEIIECGIINRFKVIAHGECLGEVILTQPGKHNILNALAAIGVALEVGISPKCCIEGLANFKGVGRRFEYKGEKNGITVIDDYGHHPIEVAATLETARKVFPDRRIVVAFQPHRFSRTQALFGEFCQVLSTVDKLLLTEIYPALEKPIPGINSQNLAQGIQQISKIDVTYYPDIDAVFHALPHVLCAGDVLITLGAGTITTIGPKFLTC.

ATP is bound at residue 112–118; sequence GTHGKTT.

Belongs to the MurCDEF family.

The protein resides in the cytoplasm. It carries out the reaction UDP-N-acetyl-alpha-D-muramate + L-alanine + ATP = UDP-N-acetyl-alpha-D-muramoyl-L-alanine + ADP + phosphate + H(+). The protein operates within cell wall biogenesis; peptidoglycan biosynthesis. Cell wall formation. This Lawsonia intracellularis (strain PHE/MN1-00) protein is UDP-N-acetylmuramate--L-alanine ligase.